The primary structure comprises 62 residues: Large ribosomal subunit protein bL28 (62 aa).

Belongs to the bacterial ribosomal protein bL28 family.

In Onion yellows phytoplasma (strain OY-M), this protein is Large ribosomal subunit protein bL28.